The sequence spans 247 residues: tRNA (guanine-N(7)-)-methyltransferase (247 aa).

S-adenosyl-L-methionine contacts are provided by residues glycine 70, 93-94 (EI), 128-129 (NA), and leucine 148. Aspartate 151 is a catalytic residue. 226–228 (SEE) contacts S-adenosyl-L-methionine.

It belongs to the class I-like SAM-binding methyltransferase superfamily. TrmB family.

Its subcellular location is the nucleus. It catalyses the reaction guanosine(46) in tRNA + S-adenosyl-L-methionine = N(7)-methylguanosine(46) in tRNA + S-adenosyl-L-homocysteine. It participates in tRNA modification; N(7)-methylguanine-tRNA biosynthesis. Its function is as follows. Catalyzes the formation of N(7)-methylguanine at position 46 (m7G46) in tRNA. This chain is tRNA (guanine-N(7)-)-methyltransferase, found in Drosophila virilis (Fruit fly).